The sequence spans 135 residues: Retinol-binding protein 1 (135 aa).

The important for interaction with STRA6 stretch occupies residues 22 to 32 (RALDVNVALRK). 3 residues coordinate all-trans-retinol: K41, M63, and Q109.

It belongs to the calycin superfamily. Fatty-acid binding protein (FABP) family. As to quaternary structure, interacts (only as retinol-free apoprotein) with STRA6.

The protein resides in the cytoplasm. It is found in the lipid droplet. Functionally, cytoplasmic retinol-binding protein. Accepts retinol from the transport protein STRA6, and thereby contributes to retinol uptake, storage and retinoid homeostasis. In Bos taurus (Bovine), this protein is Retinol-binding protein 1 (RBP1).